The primary structure comprises 281 residues: NADPH-dependent 7-cyano-7-deazaguanine reductase (281 aa).

81 to 83 (VES) contributes to the substrate binding site. 83–84 (SK) lines the NADPH pocket. The active-site Thioimide intermediate is Cys-188. Asp-195 acts as the Proton donor in catalysis. 227 to 228 (HE) is a binding site for substrate. 256-257 (RG) provides a ligand contact to NADPH. Positions 261-281 (INPLRTSHPQGLPRNMRTARQ) are disordered.

The protein belongs to the GTP cyclohydrolase I family. QueF type 2 subfamily. As to quaternary structure, homodimer.

Its subcellular location is the cytoplasm. The enzyme catalyses 7-aminomethyl-7-carbaguanine + 2 NADP(+) = 7-cyano-7-deazaguanine + 2 NADPH + 3 H(+). It functions in the pathway tRNA modification; tRNA-queuosine biosynthesis. In terms of biological role, catalyzes the NADPH-dependent reduction of 7-cyano-7-deazaguanine (preQ0) to 7-aminomethyl-7-deazaguanine (preQ1). The sequence is that of NADPH-dependent 7-cyano-7-deazaguanine reductase from Verminephrobacter eiseniae (strain EF01-2).